We begin with the raw amino-acid sequence, 328 residues long: Acyl-CoA wax alcohol acyltransferase 1 (328 aa).

2 consecutive transmembrane segments (helical) span residues 12–32 (SLSLLQWPLSYVAMFWIVQPL) and 34–53 (ICLLFTPLWPLPTVYFVWLL).

This sequence belongs to the diacylglycerol acyltransferase family.

It localises to the endoplasmic reticulum membrane. The catalysed reaction is a long chain fatty alcohol + a fatty acyl-CoA = a wax ester + CoA. The enzyme catalyses 1,2-di-(9Z-octadecenoyl)-sn-glycerol + (9Z)-octadecenoyl-CoA = 1,2,3-tri-(9Z-octadecenoyl)-glycerol + CoA. It catalyses the reaction hexadecan-1-ol + (9Z)-octadecenoyl-CoA = hexadecanyl (9Z)-octadecenoate + CoA. It carries out the reaction decan-1-ol + (9Z)-octadecenoyl-CoA = 1-O-decyl-(9Z)-octadecenoate + CoA. The catalysed reaction is (9Z)-hexadecen-1-ol + (9Z)-octadecenoyl-CoA = 1-O-(9Z)-hexadecenyl (9Z)-octadecenoate + CoA. The enzyme catalyses octadecan-1-ol + (9Z)-octadecenoyl-CoA = 1-O-octadecyl (9Z)-octadecenoate + CoA. It catalyses the reaction (9Z)-octadecen-1-ol + (9Z)-octadecenoyl-CoA = 1-O-(9Z)-octadecenyl (9Z)-octadecenoate + CoA. It carries out the reaction hexadecan-1-ol + hexadecanoyl-CoA = hexadecanyl hexadecanoate + CoA. The catalysed reaction is hexadecan-1-ol + (9Z)-hexadecenoyl-CoA = 1-O-hexadecyl (9Z)-hexadecenoate + CoA. The enzyme catalyses hexadecan-1-ol + octadecanoyl-CoA = hexadecanyl octadecanoate + CoA. It catalyses the reaction eicosan-1-ol + (9Z)-octadecenoyl-CoA = 1-O-eicosanyl (9Z)-octadecenoate + CoA. Functionally, acyltransferase that catalyzes the formation of ester bonds between fatty alcohols and fatty acyl-CoAs to form wax monoesters. Shows a strong preference for decyl alcohol (C10), with less activity towards C16 and C18 alcohols. Shows a strong preference for saturated acyl-CoAs. In Mus musculus (Mouse), this protein is Acyl-CoA wax alcohol acyltransferase 1 (Awat1).